The chain runs to 294 residues: MPPFSHVPVLADAVVAGAEHLPHHNGVLIDATLGGGGHSALLLERFPGLRLIGLDQDPTARAAAAERLAAFADRVEILATNFASYTPPAPVLMVLADLGVSSPQLDVAERGFSFRLDGPLDMRMNPGSDGETAAELIDRLEENALADLIYGYGEERLSRRIARRIKADLAAQGPYEGTAALAYAVAGCYPPKARRGRIHPATRTFQALRIAVNDELAVLDRLLQQAPDWLETGGVMGVISFHSLEDRRVKTAFLQDERLERITRKPTVATDDEQNRNPRSRSAKWRLARRVNGC.

Residues 36 to 38 (GGH), D55, F82, D97, and Q104 each bind S-adenosyl-L-methionine. The disordered stretch occupies residues 265-285 (KPTVATDDEQNRNPRSRSAKW).

Belongs to the methyltransferase superfamily. RsmH family.

It is found in the cytoplasm. The catalysed reaction is cytidine(1402) in 16S rRNA + S-adenosyl-L-methionine = N(4)-methylcytidine(1402) in 16S rRNA + S-adenosyl-L-homocysteine + H(+). Specifically methylates the N4 position of cytidine in position 1402 (C1402) of 16S rRNA. The chain is Ribosomal RNA small subunit methyltransferase H from Synechococcus sp. (strain CC9902).